Reading from the N-terminus, the 320-residue chain is Ferrochelatase (320 aa).

The Fe cation site is built by histidine 194 and glutamate 275.

Belongs to the ferrochelatase family.

It is found in the cytoplasm. It carries out the reaction heme b + 2 H(+) = protoporphyrin IX + Fe(2+). The protein operates within porphyrin-containing compound metabolism; protoheme biosynthesis; protoheme from protoporphyrin-IX: step 1/1. In terms of biological role, catalyzes the ferrous insertion into protoporphyrin IX. In Serratia proteamaculans (strain 568), this protein is Ferrochelatase.